We begin with the raw amino-acid sequence, 154 residues long: MNEAATVLGTADIQEILKLLPHRYPFLLVDRIIEIDSDNSAIGIKNVTANEPHFTGHFPEKPIMPGVLLIEGMAQTAGAICARKTGGGSNLVYFMTIDNARFRKPVVPGDRVEFHVVKQKQRGNIWKFHCDAKVDGQLVAEADIGAMIVSKEDV.

Residue His-57 is part of the active site.

This sequence belongs to the thioester dehydratase family. FabZ subfamily.

Its subcellular location is the cytoplasm. The enzyme catalyses a (3R)-hydroxyacyl-[ACP] = a (2E)-enoyl-[ACP] + H2O. Functionally, involved in unsaturated fatty acids biosynthesis. Catalyzes the dehydration of short chain beta-hydroxyacyl-ACPs and long chain saturated and unsaturated beta-hydroxyacyl-ACPs. This chain is 3-hydroxyacyl-[acyl-carrier-protein] dehydratase FabZ, found in Sinorhizobium medicae (strain WSM419) (Ensifer medicae).